The following is a 190-amino-acid chain: Transcription factor bHLH162 (190 aa).

Polar residues predominate over residues 1–12; the sequence is MEPSHSNTGQSR. Positions 1-21 are disordered; sequence MEPSHSNTGQSRSVDRKTVEK. Positions 11-63 constitute a bHLH domain; that stretch reads SRSVDRKTVEKNRRMQMKSLYSELISLLPHHSSTEPLTLPDQLDEAANYIKKL.

This sequence belongs to the bHLH protein family.

The protein resides in the nucleus. This chain is Transcription factor bHLH162, found in Arabidopsis thaliana (Mouse-ear cress).